The chain runs to 444 residues: Exodeoxyribonuclease 7 large subunit (444 aa).

The protein belongs to the XseA family. Heterooligomer composed of large and small subunits.

It is found in the cytoplasm. It carries out the reaction Exonucleolytic cleavage in either 5'- to 3'- or 3'- to 5'-direction to yield nucleoside 5'-phosphates.. Functionally, bidirectionally degrades single-stranded DNA into large acid-insoluble oligonucleotides, which are then degraded further into small acid-soluble oligonucleotides. This is Exodeoxyribonuclease 7 large subunit from Rickettsia akari (strain Hartford).